The sequence spans 476 residues: MSYAQTRTQTKAGYKAGVQDYRLTYYTPDYTPKDTDILAAFRVTPQPGVPYEEAAAAVAAESSTGTWTTVWTDLLTDLDRYKGRCYDIEPVPGEDNQFIAYIAYPLDLFEEGSVTNLLTSLVGNVFGFKALKALRLEDLRIPVAYLKTFQGPPHGIQVERDKINKYGRPLLGCTIKPKLGLSAKNYGRAVYECLRGGLDFTKDDENINSQPFQRWRDRFLFVADAIHKAQAETGEVKGHYLNVTAGTCEEMMKRAAFAKELEMPIIMHDFLTGGFTANTSLAHYCRDNGLLLHIHRAMHAVIDRQKNHGIHFRVLSKCLRMSGGDHIHTGTVVGKLEGDKDITLGFIDLLRENYIEENRSRGIYFTQDWASMPGVMAVASGGIHVWHMPALVDIFGDDAVLQFGGGTLGHPWGNAPGATANRVALEACVQARNEGRNLMREGGDIIREACRWSPELAAACELWKEIKFEFEAVDTV.

Substrate is bound by residues N124 and T174. Residue K176 is the Proton acceptor of the active site. K178 is a substrate binding site. Residues K202, D204, and E205 each contribute to the Mg(2+) site. K202 carries the post-translational modification N6-carboxylysine. H295 acts as the Proton acceptor in catalysis. Substrate contacts are provided by R296, H328, and S380.

Belongs to the RuBisCO large chain family. Type I subfamily. In terms of assembly, heterohexadecamer of 8 large chains and 8 small chains; disulfide-linked. The disulfide link is formed within the large subunit homodimers. Mg(2+) is required as a cofactor. In terms of processing, the disulfide bond which can form in the large chain dimeric partners within the hexadecamer appears to be associated with oxidative stress and protein turnover.

Its subcellular location is the carboxysome. It carries out the reaction 2 (2R)-3-phosphoglycerate + 2 H(+) = D-ribulose 1,5-bisphosphate + CO2 + H2O. It catalyses the reaction D-ribulose 1,5-bisphosphate + O2 = 2-phosphoglycolate + (2R)-3-phosphoglycerate + 2 H(+). Functionally, ruBisCO catalyzes two reactions: the carboxylation of D-ribulose 1,5-bisphosphate, the primary event in carbon dioxide fixation, as well as the oxidative fragmentation of the pentose substrate in the photorespiration process. Both reactions occur simultaneously and in competition at the same active site. This chain is Ribulose bisphosphate carboxylase large chain, found in Cyanothece sp. (strain PCC 7425 / ATCC 29141).